The chain runs to 581 residues: AP2-like ethylene-responsive transcription factor AIL6 (581 aa).

Disordered stretches follow at residues 105 to 132 (VRYS…HHNQ) and 205 to 240 (NNTN…TDSE). Composition is skewed to low complexity over residues 108–122 (SDNS…SLTQ) and 218–232 (RGNN…NNNN). 2 DNA-binding regions (AP2/ERF) span residues 268 to 331 (IYRG…TNFP) and 367 to 425 (IYRG…TNFE).

It belongs to the AP2/ERF transcription factor family. AP2 subfamily. In terms of tissue distribution, expressed in roots, seedlings, hypocotyl, inflorescence, siliques, and pistils. Also detected at low levels in leaves.

The protein localises to the nucleus. In terms of biological role, probably acts as a transcriptional activator. Binds to the GCC-box pathogenesis-related promoter element. May be involved in the regulation of gene expression by stress factors and by components of stress signal transduction pathways. The polypeptide is AP2-like ethylene-responsive transcription factor AIL6 (Arabidopsis thaliana (Mouse-ear cress)).